The primary structure comprises 343 residues: Glucokinase (343 aa).

Residue 21–26 participates in ATP binding; it reads ADVGGT.

Belongs to the bacterial glucokinase family.

The protein localises to the cytoplasm. It catalyses the reaction D-glucose + ATP = D-glucose 6-phosphate + ADP + H(+). The sequence is that of Glucokinase from Cupriavidus pinatubonensis (strain JMP 134 / LMG 1197) (Cupriavidus necator (strain JMP 134)).